We begin with the raw amino-acid sequence, 1331 residues long: ABC multidrug transporter MDR2 (1331 aa).

Composition is skewed to basic and acidic residues over residues 1-20 and 31-41; these read MVEVSEKPNTQDDGVSKQEN and SDKEKVAKKGN. Residues 1 to 51 are disordered; the sequence is MVEVSEKPNTQDDGVSKQENRNPASSSSSTSDKEKVAKKGNSDATKSSTPE. 4 helical membrane-spanning segments follow: residues 93 to 113, 147 to 167, 219 to 239, and 242 to 262; these read MIFLAIVSLASIAAGAALPLF, YFVYLGIAQFILLYVSTVGFI, KVGLTLTALSTFFSAFIIGYV, and WKLALICSSTIVAMILVMGGI. The 291-residue stretch at 97–387 folds into the ABC transmembrane type-1 1 domain; it reads AIVSLASIAA…VAPNTQAFAS (291 aa). N293 carries N-linked (GlcNAc...) asparagine glycosylation. The next 2 helical transmembrane spans lie at 325–345 and 358–378; these read LGIMFGSMMAIMYSNYGLGFW and LSAIVNILLAIVIGSFSIGNV. The ABC transporter 1 domain maps to 422–667; it reads IEFRGIKHIY…KGTYLQLVEA (246 aa). 457 to 464 is an ATP binding site; that stretch reads GPSGSGKS. N-linked (GlcNAc...) asparagine glycans are attached at residues N529 and N737. The next 2 membrane-spanning stretches (helical) occupy residues 762-782 and 810-830; these read LCGFFFAVLSGAGQPVQSVFF and FLMLGLVQLVTQSAQGVIFAI. In terms of domain architecture, ABC transmembrane type-1 2 spans 764-1051; sequence GFFFAVLSGA…VFSFSPDMGK (288 aa). An N-linked (GlcNAc...) asparagine glycan is attached at N860. 4 helical membrane-spanning segments follow: residues 884–904, 910–930, 995–1015, and 1025–1045; these read LGTILMVSTTLIVALTVALAF, LVCISTVPVLLLCGFYRFWIL, ASQSFSFFCLALGFWYGGGLL, and FFLCISCVIFGSQSAGIVFSF. The ABC transporter 2 domain occupies 1086-1324; it reads IEFRDVHFRY…KGRYYELVHM (239 aa). A glycan (N-linked (GlcNAc...) asparagine) is linked at N1108. Residue 1121–1128 participates in ATP binding; sequence GPSGCGKS.

This sequence belongs to the ABC transporter superfamily. ABCB family. Multidrug resistance exporter (TC 3.A.1.201) subfamily.

It is found in the cell membrane. The catalysed reaction is itraconazole(in) + ATP + H2O = itraconazole(out) + ADP + phosphate + H(+). Pleiotropic ABC efflux transporter that may be involved in the modulation susceptibility to a wide range of unrelated cytotoxic compounds. This Trichophyton equinum (strain ATCC MYA-4606 / CBS 127.97) (Horse ringworm fungus) protein is ABC multidrug transporter MDR2.